Consider the following 88-residue polypeptide: uncharacterized protein (88 aa).

This is an uncharacterized protein from Archaeoglobus fulgidus (strain ATCC 49558 / DSM 4304 / JCM 9628 / NBRC 100126 / VC-16).